Here is a 50-residue protein sequence, read N- to C-terminus: Phospholipase A2 trimorphin (50 aa).

Ca(2+)-binding residues include Tyr-28, Gly-30, and Gly-32. Cys-29 and Cys-45 form a disulfide bridge. His-48 is an active-site residue. Asp-49 contacts Ca(2+).

Ca(2+) serves as cofactor. In terms of tissue distribution, expressed by the venom gland.

It localises to the secreted. The enzyme catalyses a 1,2-diacyl-sn-glycero-3-phosphocholine + H2O = a 1-acyl-sn-glycero-3-phosphocholine + a fatty acid + H(+). With respect to regulation, inhibited by EDTA. In terms of biological role, PLA2 catalyzes the calcium-dependent hydrolysis of the 2-acyl groups in 3-sn-phosphoglycerides. The polypeptide is Phospholipase A2 trimorphin (Trimorphodon lambda (Sonoran lyre snake)).